Here is a 630-residue protein sequence, read N- to C-terminus: tRNA uridine 5-carboxymethylaminomethyl modification enzyme MnmG (630 aa).

13–18 (GGGHAG) serves as a coordination point for FAD. 273–287 (GPRYCPSIEDKIHRF) provides a ligand contact to NAD(+).

Belongs to the MnmG family. In terms of assembly, homodimer. Heterotetramer of two MnmE and two MnmG subunits. Requires FAD as cofactor.

The protein resides in the cytoplasm. In terms of biological role, NAD-binding protein involved in the addition of a carboxymethylaminomethyl (cmnm) group at the wobble position (U34) of certain tRNAs, forming tRNA-cmnm(5)s(2)U34. In Pseudomonas putida (Arthrobacter siderocapsulatus), this protein is tRNA uridine 5-carboxymethylaminomethyl modification enzyme MnmG.